We begin with the raw amino-acid sequence, 230 residues long: Ribonuclease 1 (230 aa).

Positions 1–22 are cleaved as a signal peptide; it reads MKILLASLCLISLLVILPSVFS. An RNA-binding site is contributed by Gln38. Cys44 and Cys50 form a disulfide bridge. RNA is bound by residues His65, Phe115, 118-119, and 122-123; these read HE and KH. The Proton donor role is filled by His65. 3 disulfide bridges follow: Cys80-Cys126, Cys186-Cys221, and Cys202-Cys213. Glu119 is an active-site residue. The active-site Proton acceptor is the His123.

It belongs to the RNase T2 family.

The catalysed reaction is a ribonucleotidyl-ribonucleotide-RNA + H2O = a 3'-end 3'-phospho-ribonucleotide-RNA + a 5'-end dephospho-ribonucleoside-RNA + H(+). In terms of biological role, may remobilize phosphate, particularly when cells senesce or when phosphate becomes limiting. The polypeptide is Ribonuclease 1 (RNS1) (Arabidopsis thaliana (Mouse-ear cress)).